We begin with the raw amino-acid sequence, 271 residues long: Mannosyl-3-phosphoglycerate phosphatase (271 aa).

Residue D13 is the Nucleophile of the active site. The Mg(2+) site is built by D13, D15, and D214.

It belongs to the HAD-like hydrolase superfamily. MPGP family. The cofactor is Mg(2+).

It is found in the cytoplasm. The catalysed reaction is 2-O-(alpha-D-mannosyl)-3-phosphoglycerate + H2O = (2R)-2-O-(alpha-D-mannosyl)-glycerate + phosphate. This Shigella sonnei (strain Ss046) protein is Mannosyl-3-phosphoglycerate phosphatase (yedP).